A 138-amino-acid polypeptide reads, in one-letter code: Centromere protein S (138 aa).

At M1 the chain carries N-acetylmethionine. Positions 110–138 (RKAQKKKKSEDGSKNSRQPAEAGVVESEN) are disordered.

It belongs to the TAF9 family. CENP-S/MHF1 subfamily. In terms of assembly, heterodimer with CENPX, sometimes called MHF; this interaction stabilizes both partners. MHF heterodimers can assemble to form tetrameric structures. MHF also coassemble with CENPT-CENPW heterodimers at centromeres to form the tetrameric CENP-T-W-S-X complex. Forms a discrete complex with FANCM and CENPX, called FANCM-MHF; this interaction, probably mediated by direct binding between CENPS and FANCM, leads to synergistic activation of double-stranded DNA binding and strongly stimulates FANCM-mediated DNA remodeling. Recruited by FANCM to the Fanconi anemia (FA) core complex, which consists of CENPS, CENPX, FANCA, FANCB, FANCC, FANCE, FANCF, FANCG, FANCL, FANCM, FAAP24 and FAAP100. The FA core complex associates with Bloom syndrome (BLM) complex, which consists of at least BLM, DNA topoisomerase 3-alpha (TOP3A), RMI1/BLAP75, RPA1/RPA70 and RPA2/RPA32. The super complex between FA and BLM is called BRAFT. Component of the CENPA-CAD complex, composed of CENPI, CENPK, CENPL, CENPO, CENPP, CENPQ, CENPR and CENPS. The CENPA-CAD complex is probably recruited on centromeres by the CENPA-NAC complex, composed of at least CENPA, CENPC, CENPH, CENPM, CENPN, CENPT and CENPU. As to expression, ubiquitously expressed.

It localises to the nucleus. The protein localises to the chromosome. It is found in the centromere. The protein resides in the kinetochore. In terms of biological role, DNA-binding component of the Fanconi anemia (FA) core complex. Required for the normal activation of the FA pathway, leading to monoubiquitination of the FANCI-FANCD2 complex in response to DNA damage, cellular resistance to DNA cross-linking drugs, and prevention of chromosomal breakage. In complex with CENPX (MHF heterodimer), crucial cofactor for FANCM in both binding and ATP-dependent remodeling of DNA. Stabilizes FANCM. In complex with CENPX and FANCM (but not other FANC proteins), rapidly recruited to blocked forks and promotes gene conversion at blocked replication forks. In complex with CENPT, CENPW and CENPX (CENP-T-W-S-X heterotetramer), involved in the formation of a functional kinetochore outer plate, which is essential for kinetochore-microtubule attachment and faithful mitotic progression. As a component of MHF and CENP-T-W-S-X complexes, binds DNA and bends it to form a nucleosome-like structure. DNA-binding function is fulfilled in the presence of CENPX, with the following preference for DNA substates: Holliday junction &gt; double-stranded &gt; splay arm &gt; single-stranded. Does not bind DNA on its own. The sequence is that of Centromere protein S (CENPS) from Homo sapiens (Human).